The following is a 465-amino-acid chain: UDP-N-acetylmuramoylalanine--D-glutamate ligase (465 aa).

Position 127 to 133 (glycine 127 to threonine 133) interacts with ATP.

This sequence belongs to the MurCDEF family.

It localises to the cytoplasm. It carries out the reaction UDP-N-acetyl-alpha-D-muramoyl-L-alanine + D-glutamate + ATP = UDP-N-acetyl-alpha-D-muramoyl-L-alanyl-D-glutamate + ADP + phosphate + H(+). Its pathway is cell wall biogenesis; peptidoglycan biosynthesis. Its function is as follows. Cell wall formation. Catalyzes the addition of glutamate to the nucleotide precursor UDP-N-acetylmuramoyl-L-alanine (UMA). The polypeptide is UDP-N-acetylmuramoylalanine--D-glutamate ligase (Cereibacter sphaeroides (strain ATCC 17023 / DSM 158 / JCM 6121 / CCUG 31486 / LMG 2827 / NBRC 12203 / NCIMB 8253 / ATH 2.4.1.) (Rhodobacter sphaeroides)).